The sequence spans 388 residues: Leucine aminopeptidase 1 (388 aa).

Positions 1–19 (MKVLTAIALSAIAFTGAVA) are cleaved as a signal peptide. Residues 20 to 88 (AVITQEAFLN…YPTLHSASYV (69 aa)) constitute a propeptide that is removed on maturation. Residues Asn106 and Asn180 are each glycosylated (N-linked (GlcNAc...) asparagine). The Zn(2+) site is built by His188 and Asp207. Asn232 is a glycosylation site (N-linked (GlcNAc...) asparagine). 2 residues coordinate Zn(2+): Glu246 and Asp273. Cys322 and Cys326 are joined by a disulfide. His355 serves as a coordination point for Zn(2+).

The protein belongs to the peptidase M28 family. M28E subfamily. Monomer. The cofactor is Zn(2+).

It localises to the secreted. Its function is as follows. Extracellular aminopeptidase that allows assimilation of proteinaceous substrates and which contributes to pathogenicity. The polypeptide is Leucine aminopeptidase 1 (lap1) (Aspergillus fumigatus (strain CBS 144.89 / FGSC A1163 / CEA10) (Neosartorya fumigata)).